The following is a 347-amino-acid chain: Glycerol-1-phosphate dehydrogenase [NAD(P)+] (347 aa).

NAD(+) contacts are provided by residues 94-98 (GKVID) and 116-119 (TAAS). D121 lines the substrate pocket. S125 is an NAD(+) binding site. D168 contributes to the substrate binding site. D168 and H248 together coordinate Zn(2+). H252 serves as a coordination point for substrate. Residue H264 coordinates Zn(2+).

The protein belongs to the glycerol-1-phosphate dehydrogenase family. Homooctamer. Zn(2+) serves as cofactor.

It is found in the cytoplasm. It carries out the reaction sn-glycerol 1-phosphate + NAD(+) = dihydroxyacetone phosphate + NADH + H(+). It catalyses the reaction sn-glycerol 1-phosphate + NADP(+) = dihydroxyacetone phosphate + NADPH + H(+). Its pathway is membrane lipid metabolism; glycerophospholipid metabolism. Partially inhibited by divalent metal cations such as Co(2+), Cu(2+) and Ni(2+). Catalyzes the NAD(P)H-dependent reduction of dihydroxyacetonephosphate (DHAP or glycerone phosphate) to glycerol 1-phosphate (G1P). The G1P thus generated is used as the glycerophosphate backbone of phospholipids in the cellular membranes of Archaea. Is also able to catalyze the reverse reaction, i.e. the NAD(P)(+)-dependent oxidation of G1P but not of G3P. Is not active toward glycerol, dihydroxyacetone, glyceraldehyde-3-phosphate, glyceraldehyde and glycerol-2-phosphate. The chain is Glycerol-1-phosphate dehydrogenase [NAD(P)+] (egsA) from Methanothermobacter thermautotrophicus (strain ATCC 29096 / DSM 1053 / JCM 10044 / NBRC 100330 / Delta H) (Methanobacterium thermoautotrophicum).